The sequence spans 132 residues: uncharacterized protein (132 aa).

An N-terminal signal peptide occupies residues 1 to 19 (MKKALFLVGLVFTAGVISS). Cys-20 carries N-palmitoyl cysteine lipidation. Residue Cys-20 is the site of S-diacylglycerol cysteine attachment.

Its subcellular location is the cell membrane. This is an uncharacterized protein from Aquifex aeolicus (strain VF5).